Consider the following 118-residue polypeptide: Ribonuclease P protein component (118 aa).

The protein belongs to the RnpA family. As to quaternary structure, consists of a catalytic RNA component (M1 or rnpB) and a protein subunit.

It carries out the reaction Endonucleolytic cleavage of RNA, removing 5'-extranucleotides from tRNA precursor.. RNaseP catalyzes the removal of the 5'-leader sequence from pre-tRNA to produce the mature 5'-terminus. It can also cleave other RNA substrates such as 4.5S RNA. The protein component plays an auxiliary but essential role in vivo by binding to the 5'-leader sequence and broadening the substrate specificity of the ribozyme. This is Ribonuclease P protein component from Levilactobacillus brevis (strain ATCC 367 / BCRC 12310 / CIP 105137 / JCM 1170 / LMG 11437 / NCIMB 947 / NCTC 947) (Lactobacillus brevis).